Reading from the N-terminus, the 203-residue chain is Proteasome subunit beta 1 (203 aa).

The propeptide at 1–7 (MTEKLKG) is removed in mature form; by autocatalysis. T8 acts as the Nucleophile in catalysis.

It belongs to the peptidase T1B family. The 20S proteasome core is composed of 14 alpha and 14 beta subunits that assemble into four stacked heptameric rings, resulting in a barrel-shaped structure. The two inner rings, each composed of seven catalytic beta subunits, are sandwiched by two outer rings, each composed of seven alpha subunits. The catalytic chamber with the active sites is on the inside of the barrel. Has a gated structure, the ends of the cylinder being occluded by the N-termini of the alpha-subunits. Is capped at one or both ends by the proteasome regulatory ATPase, PAN.

Its subcellular location is the cytoplasm. It catalyses the reaction Cleavage of peptide bonds with very broad specificity.. With respect to regulation, the formation of the proteasomal ATPase PAN-20S proteasome complex, via the docking of the C-termini of PAN into the intersubunit pockets in the alpha-rings, triggers opening of the gate for substrate entry. Interconversion between the open-gate and close-gate conformations leads to a dynamic regulation of the 20S proteasome proteolysis activity. Its function is as follows. Component of the proteasome core, a large protease complex with broad specificity involved in protein degradation. The polypeptide is Proteasome subunit beta 1 (Thermococcus kodakarensis (strain ATCC BAA-918 / JCM 12380 / KOD1) (Pyrococcus kodakaraensis (strain KOD1))).